The primary structure comprises 561 residues: Carboxylesterase 1F (561 aa).

Residues 1–17 (MFLSTLFLVSLATCVIC) form the signal peptide. Residues Cys87 and Cys116 are joined by a disulfide bond. Residue Ser221 is the Acyl-ester intermediate of the active site. A disulfide bond links Cys273 and Cys284. Active-site charge relay system residues include Glu353 and His466. The Prevents secretion from ER motif lies at 558–561 (HNEL).

It belongs to the type-B carboxylesterase/lipase family. Expressed in liver, white and brown adipose tissue, kidney, intestine, adrenal, heart and ovary. Not detected in muscle, lung, testis, brain and spleen.

Its subcellular location is the lipid droplet. The protein localises to the cytoplasm. It localises to the cytosol. The protein resides in the endoplasmic reticulum. It is found in the microsome. The catalysed reaction is a carboxylic ester + H2O = an alcohol + a carboxylate + H(+). It carries out the reaction all-trans-retinyl hexadecanoate + H2O = all-trans-retinol + hexadecanoate + H(+). In terms of biological role, involved in the detoxification of xenobiotics and in the activation of ester and amide prodrugs. Hydrolyzes retinyl esters. Hydrolyzes p-nitrophenyl butyrate (PNPB), triacylglycerol and monoacylglycerol. Shows higher activity against PNPB, a short-chain fatty acid ester, than against triolein, a long-chain fatty acid ester. Shows no detectable activity against diacylglycerol, cholesterol ester or phospholipids. May play a role in adipocyte lipolysis. The sequence is that of Carboxylesterase 1F from Mus musculus (Mouse).